A 214-amino-acid chain; its full sequence is Osteoclast-stimulating factor 1 (214 aa).

Positions 12–71 (GQVKVFRALFTFDPRTPDELYFEEGDILYISDTSDTNWWKGTCRGRTGLIPSNYVAEQAE) constitute an SH3 domain. ANK repeat units lie at residues 72–101 (TIDH…GING), 105–135 (AGNT…ELNQ), and 139–168 (LGDT…RTDI).

In terms of tissue distribution, ubiquitously expressed.

The protein resides in the cytoplasm. Induces bone resorption, acting probably through a signaling cascade which results in the secretion of factor(s) enhancing osteoclast formation and activity. The sequence is that of Osteoclast-stimulating factor 1 (ostf1) from Monopterus albus (Swamp eel).